Reading from the N-terminus, the 152-residue chain is Probable spermine N(1)-acetyltransferase (152 aa).

In terms of domain architecture, N-acetyltransferase spans 3–152 (INIKAVTDDN…NGEKVMVKEL (150 aa)). Acetyl-CoA-binding positions include 82 to 84 (FFI), 89 to 95 (QGKGLGK), and 122 to 131 (NIHAIRLYQR). The active-site Proton donor is Tyr129.

It belongs to the acetyltransferase family.

The enzyme catalyses an alkane-alpha,omega-diamine + acetyl-CoA = an N-acetylalkane-alpha,omega-diamine + CoA + H(+). The catalysed reaction is spermine + acetyl-CoA = N(1)-acetylspermine + CoA + H(+). The protein operates within amine and polyamine degradation; spermine degradation. Its function is as follows. Probably acetylates spermine to N(1)-acetylspermine. The protein is Probable spermine N(1)-acetyltransferase of Bacillus subtilis subsp. natto (strain BEST195).